We begin with the raw amino-acid sequence, 68 residues long: Large ribosomal subunit protein uL29 (68 aa).

Belongs to the universal ribosomal protein uL29 family.

The protein is Large ribosomal subunit protein uL29 of Erythrobacter litoralis (strain HTCC2594).